The following is a 520-amino-acid chain: Dihydropyrimidinase 2 (520 aa).

Zn(2+)-binding residues include histidine 59, histidine 61, and lysine 152. An N6-carboxylysine modification is found at lysine 152. A substrate-binding site is contributed by tyrosine 157. Residues histidine 185 and histidine 241 each contribute to the Zn(2+) site. Residue serine 291 coordinates substrate. Aspartate 319 is a binding site for Zn(2+). Asparagine 340 contributes to the substrate binding site.

Belongs to the metallo-dependent hydrolases superfamily. Hydantoinase/dihydropyrimidinase family. In terms of assembly, homotetramer. Zn(2+) serves as cofactor. Post-translationally, carboxylation allows a single lysine to coordinate two zinc ions. In terms of tissue distribution, body wall muscles.

The catalysed reaction is 5,6-dihydrouracil + H2O = 3-(carbamoylamino)propanoate + H(+). The polypeptide is Dihydropyrimidinase 2 (dhp-2) (Caenorhabditis elegans).